Reading from the N-terminus, the 425-residue chain is Caveolae-associated protein 2 (425 aa).

Positions 1–42 are disordered; that stretch reads MGEDAAQAEKFQHPGSDMRQEKPSSPSPMPSSTPSPSLNLGN. At Gly-2 the chain carries N-acetylglycine. An interaction with CAVIN1 region spans residues 2 to 168; that stretch reads GEDAAQAEKF…IFQEENEIPA (167 aa). A compositionally biased stretch (basic and acidic residues) spans 10-22; that stretch reads KFQHPGSDMRQEK. A phosphoserine mark is found at Ser-27, Ser-35, Ser-37, and Ser-51. Coiled coils occupy residues 61-82 and 125-154; these read LLDK…MEQR and TRAV…RRNH. Residues 62–100 form a leucine-zipper region; that stretch reads LDKLVNMLDAVQENQHKMEQRQISLEGSVKGIQNDLTKL. A phosphothreonine mark is found at Thr-196 and Thr-199. Disordered stretches follow at residues 199-234 and 271-425; these read TVDL…IKRS and IKKS…HQTS. Residues Ser-203, Ser-204, and Ser-218 each carry the phosphoserine modification. Over residues 203-219 the composition is skewed to acidic residues; the sequence is SSDDDLPHDEEALEDSA. A coiled-coil region spans residues 210–268; the sequence is HDEEALEDSAEEKVEESRAEKIKRSSLKKVDSLKKAFSRQNIEKKMNKLGTKIVSVERR. Basic and acidic residues predominate over residues 220–234; sequence EEKVEESRAEKIKRS. The span at 274-287 shows a compositional bias: polar residues; it reads SLTSNHQKISSGKS. Phosphoserine is present on residues Ser-283, Ser-284, Ser-287, Ser-288, and Ser-293. The span at 303 to 317 shows a compositional bias: basic and acidic residues; it reads REGESHAENETKSED. Residues Ser-332, Ser-341, Ser-366, and Ser-370 each carry the phosphoserine modification. Thr-375 bears the Phosphothreonine mark. Residues 376 to 385 are compositionally biased toward acidic residues; that stretch reads IVEDEEEESV. Position 395 is a phosphotyrosine (Tyr-395). Ser-403 carries the post-translational modification Phosphoserine.

It belongs to the CAVIN family. Component of the CAVIN complex composed of CAVIN1, CAVIN2, CAVIN3 and CAVIN4. Binds to PRKCA in the presence of phosphatidylserine. Interacts with CAVIN4; this augments the transactivation of NPPA by CAVIN4. Interacts with CAVIN1. Interacts with CAV3. Phosphorylated on Ser residues. In terms of tissue distribution, highly expressed in heart and lung, and expressed at lower levels in brain, kidney, liver, pancreas, placenta, and skeletal muscle.

The protein localises to the cytoplasm. Its subcellular location is the cytosol. The protein resides in the membrane. It is found in the caveola. In terms of biological role, plays an important role in caveolar biogenesis and morphology. Regulates caveolae morphology by inducing membrane curvature within caveolae. Plays a role in caveola formation in a tissue-specific manner. Required for the formation of caveolae in the lung and fat endothelia but not in the heart endothelia. Negatively regulates the size or stability of CAVIN complexes in the lung endothelial cells. May play a role in targeting PRKCA to caveolae. This chain is Caveolae-associated protein 2, found in Homo sapiens (Human).